The primary structure comprises 276 residues: 3,4-dihydroxyphenylacetate 2,3-dioxygenase (276 aa).

It depends on Fe cation as a cofactor.

The catalysed reaction is 3,4-dihydroxyphenylacetate + O2 = 2-hydroxy-5-carboxymethylmuconate semialdehyde + H(+). It functions in the pathway aromatic compound metabolism; 4-hydroxyphenylacetate degradation; pyruvate and succinate semialdehyde from 4-hydroxyphenylacetate: step 2/7. Functionally, transforms homoprotocatechuic acid (HPC) into 5-carboxymethyl-2-hydroxy-muconic semialdehyde (CHMS). The protein is 3,4-dihydroxyphenylacetate 2,3-dioxygenase (hpcB) of Escherichia coli.